We begin with the raw amino-acid sequence, 512 residues long: Probable ubiquitin carboxyl-terminal hydrolase 3 (512 aa).

A disordered region spans residues Thr64–Phe109. The USP domain occupies Arg133–Arg511. Residue Cys142 is the Nucleophile of the active site. The active-site Proton acceptor is the His453.

This sequence belongs to the peptidase C19 family.

It carries out the reaction Thiol-dependent hydrolysis of ester, thioester, amide, peptide and isopeptide bonds formed by the C-terminal Gly of ubiquitin (a 76-residue protein attached to proteins as an intracellular targeting signal).. The polypeptide is Probable ubiquitin carboxyl-terminal hydrolase 3 (ubp3) (Schizosaccharomyces pombe (strain 972 / ATCC 24843) (Fission yeast)).